The primary structure comprises 229 residues: Small ribosomal subunit protein uS3 (229 aa).

A KH type-2 domain is found at 39–107 (VRQYLTEKLK…TAQINIAEIR (69 aa)).

This sequence belongs to the universal ribosomal protein uS3 family. Part of the 30S ribosomal subunit. Forms a tight complex with proteins S10 and S14.

Its function is as follows. Binds the lower part of the 30S subunit head. Binds mRNA in the 70S ribosome, positioning it for translation. The polypeptide is Small ribosomal subunit protein uS3 (Shewanella frigidimarina (strain NCIMB 400)).